We begin with the raw amino-acid sequence, 93 residues long: Pyrimidine/purine nucleoside phosphorylase (93 aa).

It belongs to the nucleoside phosphorylase PpnP family.

The enzyme catalyses a purine D-ribonucleoside + phosphate = a purine nucleobase + alpha-D-ribose 1-phosphate. It carries out the reaction adenosine + phosphate = alpha-D-ribose 1-phosphate + adenine. It catalyses the reaction cytidine + phosphate = cytosine + alpha-D-ribose 1-phosphate. The catalysed reaction is guanosine + phosphate = alpha-D-ribose 1-phosphate + guanine. The enzyme catalyses inosine + phosphate = alpha-D-ribose 1-phosphate + hypoxanthine. It carries out the reaction thymidine + phosphate = 2-deoxy-alpha-D-ribose 1-phosphate + thymine. It catalyses the reaction uridine + phosphate = alpha-D-ribose 1-phosphate + uracil. The catalysed reaction is xanthosine + phosphate = alpha-D-ribose 1-phosphate + xanthine. Its function is as follows. Catalyzes the phosphorolysis of diverse nucleosides, yielding D-ribose 1-phosphate and the respective free bases. Can use uridine, adenosine, guanosine, cytidine, thymidine, inosine and xanthosine as substrates. Also catalyzes the reverse reactions. This Pseudomonas syringae pv. syringae (strain B728a) protein is Pyrimidine/purine nucleoside phosphorylase.